A 304-amino-acid chain; its full sequence is Oxygen-dependent coproporphyrinogen-III oxidase (304 aa).

A substrate-binding site is contributed by Ser-93. A divalent metal cation is bound by residues His-97 and His-107. The active-site Proton donor is the His-107. 109–111 provides a ligand contact to substrate; sequence NVR. His-146 and His-176 together coordinate a divalent metal cation. The segment at 241–276 is important for dimerization; the sequence is YVEFNLVYDRGTLFGLQSGGRTESILMSLPPQVRWA. 259-261 serves as a coordination point for substrate; the sequence is GGR.

Belongs to the aerobic coproporphyrinogen-III oxidase family. As to quaternary structure, homodimer. A divalent metal cation is required as a cofactor.

The protein localises to the cytoplasm. The enzyme catalyses coproporphyrinogen III + O2 + 2 H(+) = protoporphyrinogen IX + 2 CO2 + 2 H2O. It functions in the pathway porphyrin-containing compound metabolism; protoporphyrin-IX biosynthesis; protoporphyrinogen-IX from coproporphyrinogen-III (O2 route): step 1/1. Its function is as follows. Involved in the heme biosynthesis. Catalyzes the aerobic oxidative decarboxylation of propionate groups of rings A and B of coproporphyrinogen-III to yield the vinyl groups in protoporphyrinogen-IX. The protein is Oxygen-dependent coproporphyrinogen-III oxidase of Pseudomonas fluorescens (strain Pf0-1).